The sequence spans 164 residues: 3-dehydroquinate dehydratase (164 aa).

Residue tyrosine 22 is the Proton acceptor of the active site. The substrate site is built by asparagine 73, histidine 79, and aspartate 86. Histidine 99 functions as the Proton donor in the catalytic mechanism. Residues 100 to 101 and arginine 110 contribute to the substrate site; that span reads IS.

It belongs to the type-II 3-dehydroquinase family. Homododecamer.

The catalysed reaction is 3-dehydroquinate = 3-dehydroshikimate + H2O. Its pathway is metabolic intermediate biosynthesis; chorismate biosynthesis; chorismate from D-erythrose 4-phosphate and phosphoenolpyruvate: step 3/7. Its function is as follows. Catalyzes a trans-dehydration via an enolate intermediate. This Aliarcobacter butzleri (strain RM4018) (Arcobacter butzleri) protein is 3-dehydroquinate dehydratase.